Here is a 444-residue protein sequence, read N- to C-terminus: Elongation factor 1-alpha (444 aa).

One can recognise a tr-type G domain in the interval 15 to 236 (KPHINLAVVG…VLDTFQPPPR (222 aa)). The tract at residues 24–31 (GHVDNGKS) is G1. Position 24–31 (24–31 (GHVDNGKS)) interacts with GTP. Mg(2+) is bound at residue S31. The segment at 80-84 (GVTIE) is G2. The segment at 101–104 (DLPG) is G3. Residues 101 to 105 (DLPGH) and 163 to 166 (NKMD) each bind GTP. Positions 163-166 (NKMD) are G4. The segment at 202 to 204 (SAI) is G5.

It belongs to the TRAFAC class translation factor GTPase superfamily. Classic translation factor GTPase family. EF-Tu/EF-1A subfamily.

The protein resides in the cytoplasm. The catalysed reaction is GTP + H2O = GDP + phosphate + H(+). Functionally, GTP hydrolase that promotes the GTP-dependent binding of aminoacyl-tRNA to the A-site of ribosomes during protein biosynthesis. In Pyrobaculum calidifontis (strain DSM 21063 / JCM 11548 / VA1), this protein is Elongation factor 1-alpha.